A 236-amino-acid chain; its full sequence is 28 kDa antigen (236 aa).

Positions Met-1–Ala-22 are cleaved as a signal peptide. The tract at residues Pro-76–Leu-105 is disordered. Residues Gly-94–Leu-105 show a composition bias toward polar residues.

To M.tuberculosis ERP.

The chain is 28 kDa antigen from Mycobacterium leprae (strain TN).